Consider the following 213-residue polypeptide: CDP-diacylglycerol--inositol 3-phosphatidyltransferase (213 aa).

The Cytoplasmic portion of the chain corresponds to 1-5 (MPDEN). Residues 6-26 (IFLFVPNLIGYARIVFAIISF) traverse the membrane as a helical segment. A topological domain (lumenal) is located at residue Y27. A helical membrane pass occupies residues 28–48 (FMPCCPLTASSFYLLSGLLDA). Mg(2+) contacts are provided by D47 and D50. Residues 49 to 73 (FDGHAARALNQGTRFGAMLDMLTDR) lie on the Cytoplasmic side of the membrane. The a CDP-1,2-diacyl-sn-glycerol site is built by G51, R55, and T61. The Mg(2+) site is built by D68 and D72. D72 functions as the Proton acceptor in the catalytic mechanism. The helical transmembrane segment at 74 to 94 (CSTMCLLVNLALLYPGATLFF) threads the bilayer. Residue Q95 is a topological domain, lumenal. Residues 96–116 (ISMSLDVASHWLHLHSSVVRG) traverse the membrane as a helical segment. Over 117 to 139 (SESHKMIDLSGNPVLRIYYTSRP) the chain is Cytoplasmic. A helical transmembrane segment spans residues 140–160 (ALFTLCAGNELFYCLLYLFHF). At 161–174 (SEGPLVGSVGLFRM) the chain is on the lumenal side. The helical transmembrane segment at 175–195 (GLWVTAPIALLKSLISVIHLI) threads the bilayer. At 196–213 (TAARNMAALDAADRAKKK) the chain is on the cytoplasmic side.

It belongs to the CDP-alcohol phosphatidyltransferase class-I family. Mn(2+) is required as a cofactor. Requires Mg(2+) as cofactor. Detected in placenta (at protein level). Widely expressed. Higher expression in adult liver and skeletal muscle, slightly lower levels seen in pancreas, kidney, lung, placenta, brain, heart, leukocyte, colon, small intestine, ovary, testis, prostate, thymus and spleen. In fetus, expressed in kidney, liver, lung and brain.

It localises to the endoplasmic reticulum membrane. The protein localises to the cell membrane. It carries out the reaction a CDP-1,2-diacyl-sn-glycerol + myo-inositol = a 1,2-diacyl-sn-glycero-3-phospho-(1D-myo-inositol) + CMP + H(+). Its activity is regulated as follows. Inhibited by PtdIns (product inhibition), phosphatidylinositol phosphate, and nucleoside di- and tri-phosphates. Functionally, catalyzes the biosynthesis of phosphatidylinositol (PtdIns) as well as PtdIns:inositol exchange reaction. May thus act to reduce an excessive cellular PtdIns content. The exchange activity is due to the reverse reaction of PtdIns synthase and is dependent on CMP, which is tightly bound to the enzyme. The chain is CDP-diacylglycerol--inositol 3-phosphatidyltransferase from Homo sapiens (Human).